The following is a 332-amino-acid chain: MALLCYNRGCGQRFDPETNSDDACTYHPGVPVFHDALKGWSCCKRRTTDFSDFLSIVGCTKGRHNSEKPPEPVKPEVKTTEKKELSELKPKFQEHIIQAPKPVEAIKRPSPDEPMTNLELKISASLKQALDKLKLSSGNEENKKEEDSDEIKIGTSCKNGGCSKTYQGPQSLEEVCVYHSGVPIFHEGMKYWSCCRRKTSDFNTFLAQEGCTTGKHMWTKKDAGKKVVPCRHDWHQTGGEVTISVYAKNSLPELSQVVANSTLLNVHIVFEGEKEFHQNVKLWGVIDVKRSYVTMTATKIEITMRKAEPMQWASLELPAAKTEEKQKEETTE.

Alanine 2 bears the N-acetylalanine mark. An interaction with PPP5C region spans residues 2–77 (ALLCYNRGCG…KPPEPVKPEV (76 aa)). Zn(2+) is bound by residues cysteine 5, cysteine 10, cysteine 24, histidine 27, cysteine 42, and cysteine 43. CHORD domains lie at 5 to 64 (CYNR…KGRH) and 157 to 216 (CKNG…TGKH). The residue at position 47 (threonine 47) is a Phosphothreonine. Serine 51 carries the post-translational modification Phosphoserine. Residues cysteine 59, histidine 64, cysteine 157, cysteine 162, cysteine 176, histidine 179, cysteine 194, cysteine 195, cysteine 211, and histidine 216 each coordinate Zn(2+). Residues 62–82 (GRHNSEKPPEPVKPEVKTTEK) are disordered. Basic and acidic residues predominate over residues 64-82 (HNSEKPPEPVKPEVKTTEK). An interaction with HSP90AA1 and HSP90AB1 region spans residues 65–316 (NSEKPPEPVK…AEPMQWASLE (252 aa)). The 90-residue stretch at 227-316 (VVPCRHDWHQ…AEPMQWASLE (90 aa)) folds into the CS domain.

Interacts with HSP90AA1, HSP90AB1, PPP5C, ROCK1 and ROCK2.

Its function is as follows. Regulates centrosome duplication, probably by inhibiting the kinase activity of ROCK2. Proposed to act as co-chaperone for HSP90. May play a role in the regulation of NOD1 via a HSP90 chaperone complex. In vitro, has intrinsic chaperone activity. This function may be achieved by inhibiting association of ROCK2 with NPM1. Plays a role in ensuring the localization of the tyrosine kinase receptor EGFR to the plasma membrane, and thus ensures the subsequent regulation of EGFR activity and EGF-induced actin cytoskeleton remodeling. Involved in stress response. Prevents tumorigenesis. The sequence is that of Cysteine and histidine-rich domain-containing protein 1 (CHORDC1) from Bos taurus (Bovine).